Here is a 147-residue protein sequence, read N- to C-terminus: D-aminoacyl-tRNA deacylase (147 aa).

The short motif at 137 to 138 is the Gly-cisPro motif, important for rejection of L-amino acids element; that stretch reads GP.

This sequence belongs to the DTD family. In terms of assembly, homodimer.

It localises to the cytoplasm. It carries out the reaction glycyl-tRNA(Ala) + H2O = tRNA(Ala) + glycine + H(+). The enzyme catalyses a D-aminoacyl-tRNA + H2O = a tRNA + a D-alpha-amino acid + H(+). Functionally, an aminoacyl-tRNA editing enzyme that deacylates mischarged D-aminoacyl-tRNAs. Also deacylates mischarged glycyl-tRNA(Ala), protecting cells against glycine mischarging by AlaRS. Acts via tRNA-based rather than protein-based catalysis; rejects L-amino acids rather than detecting D-amino acids in the active site. By recycling D-aminoacyl-tRNA to D-amino acids and free tRNA molecules, this enzyme counteracts the toxicity associated with the formation of D-aminoacyl-tRNA entities in vivo and helps enforce protein L-homochirality. This chain is D-aminoacyl-tRNA deacylase, found in Jannaschia sp. (strain CCS1).